The sequence spans 729 residues: Catalase-peroxidase (729 aa).

Residues 1–24 form a disordered region; sequence MDAKTNDGKAGQCPFTSGRGHKNR. Residues 95–217 constitute a cross-link (tryptophyl-tyrosyl-methioninium (Trp-Tyr) (with M-243)); that stretch reads WHSAGTYRIT…LAAVQMGLIY (123 aa). The active-site Proton acceptor is His96. The tryptophyl-tyrosyl-methioninium (Tyr-Met) (with W-95) cross-link spans 217-243; the sequence is YVNPEGPNGQPDPLAAAKDIRETFLRM. His258 contacts heme b.

Belongs to the peroxidase family. Peroxidase/catalase subfamily. Homodimer or homotetramer. It depends on heme b as a cofactor. In terms of processing, formation of the three residue Trp-Tyr-Met cross-link is important for the catalase, but not the peroxidase activity of the enzyme.

It carries out the reaction H2O2 + AH2 = A + 2 H2O. The enzyme catalyses 2 H2O2 = O2 + 2 H2O. Bifunctional enzyme with both catalase and broad-spectrum peroxidase activity. This is Catalase-peroxidase from Nitrobacter winogradskyi (strain ATCC 25391 / DSM 10237 / CIP 104748 / NCIMB 11846 / Nb-255).